The sequence spans 296 residues: GTPase Era (296 aa).

In terms of domain architecture, Era-type G spans 7–174; that stretch reads KCSMSAIVGT…VDYLCETSPY (168 aa). The tract at residues 15 to 22 is G1; the sequence is GTTNAGKS. Position 15 to 22 (15 to 22) interacts with GTP; sequence GTTNAGKS. Residues 41–45 are G2; that stretch reads QTTRV. The segment at 62 to 65 is G3; that stretch reads DTPG. GTP is bound by residues 62-66 and 124-127; these read DTPGI and NKID. The tract at residues 124 to 127 is G4; that stretch reads NKID. A G5 region spans residues 153-155; sequence ISA. Residues 205-282 form the KH type-2 domain; it reads LRHELPYSLS…HLFLFVKVRE (78 aa).

This sequence belongs to the TRAFAC class TrmE-Era-EngA-EngB-Septin-like GTPase superfamily. Era GTPase family. As to quaternary structure, monomer.

It is found in the cytoplasm. Its subcellular location is the cell inner membrane. Functionally, an essential GTPase that binds both GDP and GTP, with rapid nucleotide exchange. Plays a role in 16S rRNA processing and 30S ribosomal subunit biogenesis and possibly also in cell cycle regulation and energy metabolism. This chain is GTPase Era, found in Ehrlichia ruminantium (strain Gardel).